A 323-amino-acid polypeptide reads, in one-letter code: Delta(7)-sterol 5(6)-desaturase ERG3B (323 aa).

3 consecutive transmembrane segments (helical) span residues 67-87 (ASIL…SAAL), 112-132 (IQSS…FFLG), and 150-170 (SWLA…IYWI). Residues 157–285 (ILYMVFNDLG…YFTWADNYWG (129 aa)) form the Fatty acid hydroxylase domain. The Histidine box-1 motif lies at 171–175 (HRLEH). The Histidine box-2 motif lies at 184-188 (HKPHH). The Histidine box-3 signature appears at 262 to 266 (HTLHH).

Belongs to the sterol desaturase family.

Its subcellular location is the endoplasmic reticulum membrane. The enzyme catalyses episterol + 2 Fe(II)-[cytochrome b5] + O2 + 2 H(+) = 5-dehydroepisterol + 2 Fe(III)-[cytochrome b5] + 2 H2O. Its pathway is steroid metabolism; ergosterol biosynthesis. In terms of biological role, C-5 sterol desaturase; part of the third module of ergosterol biosynthesis pathway that includes the late steps of the pathway. ERG3A and ERG3BB catalyze the introduction of a C-5 double bond in the B ring to produce 5-dehydroepisterol. The third module or late pathway involves the ergosterol synthesis itself through consecutive reactions that mainly occur in the endoplasmic reticulum (ER) membrane. Firstly, the squalene synthase ERG9 catalyzes the condensation of 2 farnesyl pyrophosphate moieties to form squalene, which is the precursor of all steroids. Squalene synthase is crucial for balancing the incorporation of farnesyl diphosphate (FPP) into sterol and nonsterol isoprene synthesis. Secondly, squalene is converted into lanosterol by the consecutive action of the squalene epoxidase ERG1 and the lanosterol synthase ERG7. Then, the delta(24)-sterol C-methyltransferase ERG6 methylates lanosterol at C-24 to produce eburicol. Eburicol is the substrate of the sterol 14-alpha demethylase encoded by CYP51A, CYP51B and CYP51C, to yield 4,4,24-trimethyl ergosta-8,14,24(28)-trienol. CYP51B encodes the enzyme primarily responsible for sterol 14-alpha-demethylation, and plays an essential role in ascospore formation. CYP51A encodes an additional sterol 14-alpha-demethylase, induced on ergosterol depletion and responsible for the intrinsic variation in azole sensitivity. The third CYP51 isoform, CYP51C, does not encode a sterol 14-alpha-demethylase, but is required for full virulence on host wheat ears. The C-14 reductase ERG24 then reduces the C14=C15 double bond which leads to 4,4-dimethylfecosterol. A sequence of further demethylations at C-4, involving the C-4 demethylation complex containing the C-4 methylsterol oxidases ERG25, the sterol-4-alpha-carboxylate 3-dehydrogenase ERG26 and the 3-keto-steroid reductase ERG27, leads to the production of fecosterol via 4-methylfecosterol. ERG28 has a role as a scaffold to help anchor ERG25, ERG26 and ERG27 to the endoplasmic reticulum. The C-8 sterol isomerase ERG2 then catalyzes the reaction which results in unsaturation at C-7 in the B ring of sterols and thus converts fecosterol to episterol. The sterol-C5-desaturases ERG3A and ERG3BB then catalyze the introduction of a C-5 double bond in the B ring to produce 5-dehydroepisterol. The C-22 sterol desaturases ERG5A and ERG5B further convert 5-dehydroepisterol into ergosta-5,7,22,24(28)-tetraen-3beta-ol by forming the C-22(23) double bond in the sterol side chain. Finally, ergosta-5,7,22,24(28)-tetraen-3beta-ol is substrate of the C-24(28) sterol reductase ERG4 to produce ergosterol. This chain is Delta(7)-sterol 5(6)-desaturase ERG3B, found in Gibberella zeae (strain ATCC MYA-4620 / CBS 123657 / FGSC 9075 / NRRL 31084 / PH-1) (Wheat head blight fungus).